The sequence spans 185 residues: Elongation factor P (185 aa).

It belongs to the elongation factor P family.

It is found in the cytoplasm. It participates in protein biosynthesis; polypeptide chain elongation. In terms of biological role, involved in peptide bond synthesis. Stimulates efficient translation and peptide-bond synthesis on native or reconstituted 70S ribosomes in vitro. Probably functions indirectly by altering the affinity of the ribosome for aminoacyl-tRNA, thus increasing their reactivity as acceptors for peptidyl transferase. This Mesoplasma florum (strain ATCC 33453 / NBRC 100688 / NCTC 11704 / L1) (Acholeplasma florum) protein is Elongation factor P.